Here is a 336-residue protein sequence, read N- to C-terminus: tRNA N6-adenosine threonylcarbamoyltransferase (336 aa).

H111 and H115 together coordinate Fe cation. Substrate is bound by residues V134–G138, D167, G180, D184, and N272. D300 contributes to the Fe cation binding site.

The protein belongs to the KAE1 / TsaD family. Requires Fe(2+) as cofactor.

The protein resides in the cytoplasm. It carries out the reaction L-threonylcarbamoyladenylate + adenosine(37) in tRNA = N(6)-L-threonylcarbamoyladenosine(37) in tRNA + AMP + H(+). Required for the formation of a threonylcarbamoyl group on adenosine at position 37 (t(6)A37) in tRNAs that read codons beginning with adenine. Is involved in the transfer of the threonylcarbamoyl moiety of threonylcarbamoyl-AMP (TC-AMP) to the N6 group of A37, together with TsaE and TsaB. TsaD likely plays a direct catalytic role in this reaction. The protein is tRNA N6-adenosine threonylcarbamoyltransferase of Caldicellulosiruptor saccharolyticus (strain ATCC 43494 / DSM 8903 / Tp8T 6331).